We begin with the raw amino-acid sequence, 155 residues long: Cytochrome c-type biogenesis protein CcmE (155 aa).

The Cytoplasmic segment spans residues 1–8 (MNPLRKKR). A helical; Signal-anchor for type II membrane protein transmembrane segment spans residues 9 to 29 (LLIIAALLAGVGLAMTLALGA). Topologically, residues 30–155 (LKENINLFYT…GGSSTPAKQG (126 aa)) are periplasmic. Heme contacts are provided by His124 and Tyr128. Residues 134–155 (TKALRDSGQAAPGGSSTPAKQG) form a disordered region.

It belongs to the CcmE/CycJ family.

Its subcellular location is the cell inner membrane. Heme chaperone required for the biogenesis of c-type cytochromes. Transiently binds heme delivered by CcmC and transfers the heme to apo-cytochromes in a process facilitated by CcmF and CcmH. The protein is Cytochrome c-type biogenesis protein CcmE of Pseudomonas savastanoi pv. phaseolicola (strain 1448A / Race 6) (Pseudomonas syringae pv. phaseolicola (strain 1448A / Race 6)).